A 65-amino-acid polypeptide reads, in one-letter code: Large ribosomal subunit protein bL35 (65 aa).

A compositionally biased stretch (basic residues) spans 1-16 (MPKQKTHRASAKRFKR). The interval 1-21 (MPKQKTHRASAKRFKRTGSGG) is disordered.

This sequence belongs to the bacterial ribosomal protein bL35 family.

The chain is Large ribosomal subunit protein bL35 from Streptococcus pyogenes serotype M18 (strain MGAS8232).